A 67-amino-acid chain; its full sequence is ATP synthase subunit c (67 aa).

The next 2 helical transmembrane spans lie at 6 to 26 (ILAL…LVAN) and 46 to 66 (IMGV…TFFV).

The protein belongs to the ATPase C chain family. In terms of assembly, F-type ATPases have 2 components, F(1) - the catalytic core - and F(0) - the membrane proton channel. F(1) has five subunits: alpha(3), beta(3), gamma(1), delta(1), epsilon(1). F(0) has three main subunits: a(1), b(2) and c(10-14). The alpha and beta chains form an alternating ring which encloses part of the gamma chain. F(1) is attached to F(0) by a central stalk formed by the gamma and epsilon chains, while a peripheral stalk is formed by the delta and b chains.

The protein resides in the cell membrane. F(1)F(0) ATP synthase produces ATP from ADP in the presence of a proton or sodium gradient. F-type ATPases consist of two structural domains, F(1) containing the extramembraneous catalytic core and F(0) containing the membrane proton channel, linked together by a central stalk and a peripheral stalk. During catalysis, ATP synthesis in the catalytic domain of F(1) is coupled via a rotary mechanism of the central stalk subunits to proton translocation. In terms of biological role, key component of the F(0) channel; it plays a direct role in translocation across the membrane. A homomeric c-ring of between 10-14 subunits forms the central stalk rotor element with the F(1) delta and epsilon subunits. The sequence is that of ATP synthase subunit c from Streptococcus mutans serotype c (strain ATCC 700610 / UA159).